Here is a 167-residue protein sequence, read N- to C-terminus: MAAARPVLARALLQQCLFARLQVKPPEHGAEAEWEEIQRGLVIYICFFKGADEDLVPKIVNVLLNVKLSEDENGEYVSVLDLPGNVLIIPQATLGGKLKGRKMQYHTNIEKEKGMELYSQFVSLCEKELAANPKCMEAGVLVKHGTYGNRQVLKLDTNGPYTHLVEF.

Positions 159–160 (GP) match the Gly-transPro motif, allows the protein to recognize chirality of D-amino acids motif.

Belongs to the DTD family. As to quaternary structure, homodimer.

The protein resides in the cytoplasm. It carries out the reaction a D-aminoacyl-tRNA + H2O = a tRNA + a D-alpha-amino acid + H(+). The catalysed reaction is glycyl-tRNA(Ala) + H2O = tRNA(Ala) + glycine + H(+). The enzyme catalyses D-tyrosyl-tRNA(Tyr) + H2O = D-tyrosine + tRNA(Tyr). It catalyses the reaction L-alanyl-tRNA(Thr) + H2O = tRNA(Thr) + L-alanine + H(+). Its function is as follows. Deacylates mischarged D-aminoacyl-tRNAs. Also deacylates mischarged glycyl-tRNA(Ala), protecting cells against glycine mischarging by AlaRS. Probably acts by rejecting L-amino acids from its binding site rather than specific recognition of D-amino acids. Catalyzes the hydrolysis of D-tyrosyl-tRNA(Tyr), has no activity on correctly charged L-tyrosyl-tRNA(Tyr). By recycling D-aminoacyl-tRNA to D-amino acids and free tRNA molecules, this enzyme counteracts the toxicity associated with the formation of D-aminoacyl-tRNA entities in vivo and helps enforce protein L-homochirality. In contrast to DTD1, deacylates L-Ala mischarged on tRNA(Thr)(G4.U69) by alanine-tRNA ligase AARS. Can deacylate L-Ala due to a relaxed specificity for substrate chirality caused by the trans conformation of the Gly-Pro motif in the active site. Also hydrolyzes correctly charged, achiral, glycyl-tRNA(Gly) in vitro, although in vivo EEF1A1/EF-Tu may protect cognate achiral glycyl-tRNA(Gly) from DTD2-mediated deacetylation. The sequence is that of D-aminoacyl-tRNA deacylase 2 (DTD2) from Gallus gallus (Chicken).